We begin with the raw amino-acid sequence, 414 residues long: ZP domain-containing protein (414 aa).

The first 17 residues, Met1–Ala17, serve as a signal peptide directing secretion. Positions Gln18–Asp65 are disordered. At Gln18 to Thr364 the chain is on the extracellular side. The segment covering Pro39 to Pro57 has biased composition (low complexity). Positions Ile70 to Ser323 constitute a ZP domain. An intrachain disulfide couples Cys241 to Cys302. A helical transmembrane segment spans residues Ile365 to Val385. The Cytoplasmic portion of the chain corresponds to Met386–Val414.

In terms of tissue distribution, component of the acid-insoluble and acid-soluble organic matrix of the aragonitic skeleton (at protein level).

It is found in the membrane. The polypeptide is ZP domain-containing protein (Acropora millepora (Staghorn coral)).